The primary structure comprises 157 residues: Protein Smg homolog (157 aa).

The protein belongs to the Smg family.

This is Protein Smg homolog from Tolumonas auensis (strain DSM 9187 / NBRC 110442 / TA 4).